The chain runs to 444 residues: MSQSYINVIGAGLAGSEAAYQIAKRGIPVKLYEMRGVKATPQHKTTHFAELVCSNSFRGDSLTNAVGLLKEELRRLDSIIMRAGEAHRVPAGGAMAVDREGYAKAVTAELENHPLIEIIREEVIDIPSDAITVIATGPLTSDSLAEKIHALNGGAGFYFYDAAAPIVDKSTINMDRVYLKSRYDKGEAAYLNCPMTKEEFMAFHEALTTAEEAPLNAFEKEKYFEGCMPIEVMAKRGIKTMLYGPMKPVGLEYPDDYKGPRDGDFKTPYAVVQLRQDNAAGSLYNIVGFQTHLKWGEQKRVFQMIPGLEHAEFVRYGVMHRNSYMDSPKLLTQGFQSRANHRLFFAGQMTGVEGYVESAASGLVAGINAARLFKEEEPLVFPNTTAIGSLPYYITHADSKHFQPMNVNFGIIKELDGPRIRDKKERYEAIAKRALADLAAYLTV.

10-15 (GAGLAG) serves as a coordination point for FAD.

This sequence belongs to the MnmG family. TrmFO subfamily. It depends on FAD as a cofactor.

It is found in the cytoplasm. The enzyme catalyses uridine(54) in tRNA + (6R)-5,10-methylene-5,6,7,8-tetrahydrofolate + NADH + H(+) = 5-methyluridine(54) in tRNA + (6S)-5,6,7,8-tetrahydrofolate + NAD(+). It carries out the reaction uridine(54) in tRNA + (6R)-5,10-methylene-5,6,7,8-tetrahydrofolate + NADPH + H(+) = 5-methyluridine(54) in tRNA + (6S)-5,6,7,8-tetrahydrofolate + NADP(+). Functionally, catalyzes the folate-dependent formation of 5-methyl-uridine at position 54 (M-5-U54) in all tRNAs. The polypeptide is Methylenetetrahydrofolate--tRNA-(uracil-5-)-methyltransferase TrmFO (Streptococcus equi subsp. equi (strain 4047)).